Reading from the N-terminus, the 441-residue chain is ATP-dependent protease ATPase subunit HslU (441 aa).

Residues Ile18, 60–65 (GVGKTE), Asp254, Glu319, and Arg391 each bind ATP.

It belongs to the ClpX chaperone family. HslU subfamily. A double ring-shaped homohexamer of HslV is capped on each side by a ring-shaped HslU homohexamer. The assembly of the HslU/HslV complex is dependent on binding of ATP.

Its subcellular location is the cytoplasm. Functionally, ATPase subunit of a proteasome-like degradation complex; this subunit has chaperone activity. The binding of ATP and its subsequent hydrolysis by HslU are essential for unfolding of protein substrates subsequently hydrolyzed by HslV. HslU recognizes the N-terminal part of its protein substrates and unfolds these before they are guided to HslV for hydrolysis. This Shewanella sediminis (strain HAW-EB3) protein is ATP-dependent protease ATPase subunit HslU.